Here is a 326-residue protein sequence, read N- to C-terminus: MSCASEVQAQLFTHPVQIIYACVQTVLFLATIIGSLLAIVQLCKKTTIPDSTKVLLIGALFFANAHELAYFSSPFKVFKMNLFHTNTSCYPLASTLECIPTTTVLAMGISGNMLIQSALSIFRLLATIFPVCYSRMRALPGVVLLFMVLIPSFLSYSWIRSDIVLDDYQMFCSQWSANISSRANTYLEYCSYLTVAHIIINALIILRNRSVESKCRFDVQQRYLNSETLKTTQTICYLSIAQFLAMFLYSGGVLFMRKNQKNIPTLIYINVIVWVYAPPYACVSLAPLILFSLWNLKKQRQIRIQSITVQKETQEDHIRKLQLSWG.

Residues 1–17 (MSCASEVQAQLFTHPVQ) are Extracellular-facing. A helical membrane pass occupies residues 18-38 (IIYACVQTVLFLATIIGSLLA). At 39-54 (IVQLCKKTTIPDSTKV) the chain is on the cytoplasmic side. Residues 55-75 (LLIGALFFANAHELAYFSSPF) traverse the membrane as a helical segment. The Extracellular portion of the chain corresponds to 76–101 (KVFKMNLFHTNTSCYPLASTLECIPT). Residues 102–122 (TTVLAMGISGNMLIQSALSIF) form a helical membrane-spanning segment. Residues 123–138 (RLLATIFPVCYSRMRA) lie on the Cytoplasmic side of the membrane. The helical transmembrane segment at 139–159 (LPGVVLLFMVLIPSFLSYSWI) threads the bilayer. Topologically, residues 160 to 185 (RSDIVLDDYQMFCSQWSANISSRANT) are extracellular. The helical transmembrane segment at 186 to 206 (YLEYCSYLTVAHIIINALIIL) threads the bilayer. Topologically, residues 207-234 (RNRSVESKCRFDVQQRYLNSETLKTTQT) are cytoplasmic. A helical membrane pass occupies residues 235–255 (ICYLSIAQFLAMFLYSGGVLF). Topologically, residues 256-270 (MRKNQKNIPTLIYIN) are extracellular. The chain crosses the membrane as a helical span at residues 271–291 (VIVWVYAPPYACVSLAPLILF). Residues 292 to 326 (SLWNLKKQRQIRIQSITVQKETQEDHIRKLQLSWG) are Cytoplasmic-facing.

This sequence belongs to the nematode receptor-like protein sra family.

The protein resides in the membrane. The polypeptide is Serpentine receptor class alpha-12 (Caenorhabditis briggsae).